Reading from the N-terminus, the 490-residue chain is Cyclin-T1-3 (490 aa).

Disordered regions lie at residues 275–391 (RVAP…GDVA) and 414–490 (AAED…RLRS). Composition is skewed to polar residues over residues 282–298 (QGNDTEGSSASVVNQRA) and 352–365 (TANSNEGPNMSSTM). 2 stretches are compositionally biased toward basic and acidic residues: residues 367-391 (AMKKIDKDKVKAALEKRRKSKGDVA) and 457-490 (QEYRSPELDNRKRKDMHEHRNYDRGERDLKRLRS).

The protein belongs to the cyclin family. Cyclin T subfamily.

This chain is Cyclin-T1-3 (CYCT1-3), found in Oryza sativa subsp. japonica (Rice).